We begin with the raw amino-acid sequence, 141 residues long: Hemoglobin subunit alpha (141 aa).

The Globin domain occupies 1-141 (VLSPADKNNV…VSTVLTSKYR (141 aa)). The residue at position 3 (Ser3) is a Phosphoserine. N6-succinyllysine is present on residues Lys7 and Lys11. Lys16 is modified (N6-acetyllysine; alternate). Lys16 carries the post-translational modification N6-succinyllysine; alternate. A Phosphotyrosine modification is found at Tyr24. Phosphoserine is present on Ser35. Position 40 is an N6-succinyllysine (Lys40). Residue Ser49 is modified to Phosphoserine. His58 is an O2 binding site. Position 87 (His87) interacts with heme b. Ser102 carries the phosphoserine modification. The residue at position 108 (Thr108) is a Phosphothreonine. Residues Ser124 and Ser131 each carry the phosphoserine modification. 2 positions are modified to phosphothreonine: Thr134 and Thr137. Residue Ser138 is modified to Phosphoserine.

This sequence belongs to the globin family. As to quaternary structure, heterotetramer of two alpha chains and two beta chains. In terms of tissue distribution, red blood cells.

Functionally, involved in oxygen transport from the lung to the various peripheral tissues. Its function is as follows. Hemopressin acts as an antagonist peptide of the cannabinoid receptor CNR1. Hemopressin-binding efficiently blocks cannabinoid receptor CNR1 and subsequent signaling. The protein is Hemoglobin subunit alpha (HBA) of Urocitellus townsendii (Townsend's ground squirrel).